Reading from the N-terminus, the 350-residue chain is Alcohol dehydrogenase 1 (350 aa).

Zn(2+)-binding residues include Cys44, Thr46, His67, Cys98, Cys101, Cys104, Cys112, and Cys154. An alcohol is bound by residues Thr46 and His67. Thr46 lines the NAD(+) pocket. NAD(+) is bound by residues 178–182, Asp202, Lys207, 271–273, and Arg343; these read GAGGG and IGL.

The protein belongs to the zinc-containing alcohol dehydrogenase family. Homotetramer. It depends on Zn(2+) as a cofactor.

Its subcellular location is the cytoplasm. The protein resides in the secreted. It catalyses the reaction a primary alcohol + NAD(+) = an aldehyde + NADH + H(+). The catalysed reaction is a secondary alcohol + NAD(+) = a ketone + NADH + H(+). In Emericella nidulans (strain FGSC A4 / ATCC 38163 / CBS 112.46 / NRRL 194 / M139) (Aspergillus nidulans), this protein is Alcohol dehydrogenase 1 (alcA).